A 135-amino-acid chain; its full sequence is Small ribosomal subunit protein uS9 (135 aa).

Residues 107 to 118 are compositionally biased toward basic and acidic residues; the sequence is LVGDPRRTEPHK. The tract at residues 107-135 is disordered; it reads LVGDPRRTEPHKPNRSTKGPRAKRQKSYR. A compositionally biased stretch (basic residues) spans 119–135; it reads PNRSTKGPRAKRQKSYR.

The protein belongs to the universal ribosomal protein uS9 family. As to quaternary structure, part of the 30S ribosomal subunit.

The protein is Small ribosomal subunit protein uS9 of Pyrococcus furiosus (strain ATCC 43587 / DSM 3638 / JCM 8422 / Vc1).